Reading from the N-terminus, the 354-residue chain is MTQRKIIHIDCDCFYAAIEMRDEPDLAGKPLAVGGSAERRGVIATCNYEARAYGVRSAMSSRHALKLCPDLTIVKPRMDAYKEASREIHTIFRDYTDLIEPLSLDEAFLDVSEAGHFSGSATRIAQDIRRRVSNQLHITVSAGVAPNKFLAKIASDWKKPNGLFVITPDQVEEFVASLPVTKLHGVGKVTADKLGRLGIVDCADLRSRSKLALVREFGSFGERLWSLAHGIDDRPVQNDSRRQSVSVENTYDTDLPDLAACLEKLPDLLETLSGRMARMEGQYRPGKPFVKVKFHDFTQTTLEQSGAGRDLGSYEQLLAQAFARGGKPVRLLGIGVRLHDLRAAHEQLELFSRQ.

Positions 6 to 187 (IIHIDCDCFY…LPVTKLHGVG (182 aa)) constitute a UmuC domain. 2 residues coordinate Mg(2+): aspartate 10 and aspartate 105. Glutamate 106 is a catalytic residue.

The protein belongs to the DNA polymerase type-Y family. As to quaternary structure, monomer. Mg(2+) is required as a cofactor.

The protein localises to the cytoplasm. The enzyme catalyses DNA(n) + a 2'-deoxyribonucleoside 5'-triphosphate = DNA(n+1) + diphosphate. In terms of biological role, poorly processive, error-prone DNA polymerase involved in untargeted mutagenesis. Copies undamaged DNA at stalled replication forks, which arise in vivo from mismatched or misaligned primer ends. These misaligned primers can be extended by PolIV. Exhibits no 3'-5' exonuclease (proofreading) activity. May be involved in translesional synthesis, in conjunction with the beta clamp from PolIII. The protein is DNA polymerase IV of Pseudomonas syringae pv. syringae (strain B728a).